Here is a 195-residue protein sequence, read N- to C-terminus: Der GTPase-activating protein YihI (195 aa).

Positions 1 to 81 (MSRTKKTRRI…KAVVKEVKDP (81 aa)) are disordered. Composition is skewed to basic and acidic residues over residues 9–23 (RITD…DKPK), 38–49 (TRYELDAQAREE), and 66–81 (DPAE…VKDP).

The protein belongs to the YihI family. In terms of assembly, interacts with Der.

Its function is as follows. A GTPase-activating protein (GAP) that modifies Der/EngA GTPase function. May play a role in ribosome biogenesis. In Mannheimia haemolytica (Pasteurella haemolytica), this protein is Der GTPase-activating protein YihI.